A 348-amino-acid chain; its full sequence is MRILGIETSCDETGVAIYDEQRGLIANQLYSQIEMHADYGGVVPELASRDHIRKTLPLIQAALKEANLTASEIDGIAYTAGPGLVGALLVGATIARALAYAWNVPALAVHHMEGHLMAPMLEENPPEFPFIALLISGGHTQLIKVAGVGEYEILGESIDDAAGEAFDKTGKLLGLDYPAGVALSQLAEKGTPNRFVFPRPMTDRPGLDFSFSGLKTFAANTINAQLDENGQLNEQTRCDIAHAFQQAVVDTIIIKCKRALQQTGYSRLVMAGGVSANKQLRAELATMMQALKGQVYYPRPQFCTDNGAMIAYTGFIRLKKGEKTDLSVSVKPRWPMTTLLKLSAHHKV.

Histidine 111 and histidine 115 together coordinate Fe cation. Substrate contacts are provided by residues 134-138 (LISGG), aspartate 167, glycine 180, and asparagine 277. Position 305 (aspartate 305) interacts with Fe cation.

It belongs to the KAE1 / TsaD family. Fe(2+) serves as cofactor.

The protein resides in the cytoplasm. It carries out the reaction L-threonylcarbamoyladenylate + adenosine(37) in tRNA = N(6)-L-threonylcarbamoyladenosine(37) in tRNA + AMP + H(+). Its function is as follows. Required for the formation of a threonylcarbamoyl group on adenosine at position 37 (t(6)A37) in tRNAs that read codons beginning with adenine. Is involved in the transfer of the threonylcarbamoyl moiety of threonylcarbamoyl-AMP (TC-AMP) to the N6 group of A37, together with TsaE and TsaB. TsaD likely plays a direct catalytic role in this reaction. The protein is tRNA N6-adenosine threonylcarbamoyltransferase of Haemophilus ducreyi (strain 35000HP / ATCC 700724).